Consider the following 552-residue polypeptide: Thermosome subunit beta (552 aa).

It belongs to the TCP-1 chaperonin family. As to quaternary structure, forms a Heterooligomeric complex of two stacked nine-membered rings; one of alpha and the other of beta subunits. The N-terminus is blocked.

In terms of biological role, molecular chaperone; binds unfolded polypeptides in vitro, and has a weak ATPase activity. The polypeptide is Thermosome subunit beta (thsB) (Sulfurisphaera tokodaii (strain DSM 16993 / JCM 10545 / NBRC 100140 / 7) (Sulfolobus tokodaii)).